The following is a 117-amino-acid chain: EVQLQQSGPELVKPGASVKMSCKASGYTFTDYYMKWVKQSHGKSLEWIGDINPNNGGTSYNQKFKGKATLTVDKSSSTAYMQLNSLTSEDSAVYYCARDRYWYFDVWGAGTTVTVSS.

The region spanning 1–116 (EVQLQQSGPE…WGAGTTVTVS (116 aa)) is the Ig-like domain. The cysteines at positions 22 and 96 are disulfide-linked.

The sequence is that of Ig heavy chain V region J558 from Mus musculus (Mouse).